The following is a 410-amino-acid chain: Metal tolerance protein 3 (410 aa).

Residues 1–58 (MDGDDRRTPLLGGEGGSTRPPSLRRRDSARSLRSTFLSRLPDKVRGGGDPERPAADVD) form a disordered region. Residues 1-114 (MDGDDRRTPL…EDKEQKQSES (114 aa)) are Cytoplasmic-facing. Over residues 40–58 (LPDKVRGGGDPERPAADVD) the composition is skewed to basic and acidic residues. A helical transmembrane segment spans residues 115–135 (AMKISNYANIILLVFKVYATI). Over 136 to 140 (KTGSM) the chain is Vacuolar. A helical transmembrane segment spans residues 141–161 (AIAASTLDSLLDFLAGGILYF). At 162–184 (THLTMKSVNIYKYPIGKLRVQPV) the chain is on the cytoplasmic side. The chain crosses the membrane as a helical span at residues 185–205 (GIIVFAAIMATLGFQVLIQAI). Residues 206 to 221 (EQLVENKAGEKMTPEQ) are Vacuolar-facing. A helical membrane pass occupies residues 222-242 (LIWLYSIMLSATVVKLALYIY). Topologically, residues 243 to 258 (CRSSGNSIVQAYAKDH) are cytoplasmic. A helical membrane pass occupies residues 259–275 (YFDVVTNVVGLVAAVLG). At 276-284 (DKFFWWIDP) the chain is on the vacuolar side. The chain crosses the membrane as a helical span at residues 285 to 303 (VGAVLLAVYTIVNWSGTVY). The Cytoplasmic segment spans residues 304–410 (ENAVTLVGQC…VRSRLPSTEP (107 aa)).

The protein belongs to the cation diffusion facilitator (CDF) transporter (TC 2.A.4) family. SLC30A subfamily.

The protein resides in the vacuole membrane. Its function is as follows. Involved in sequestration of excess metal in the cytoplasm into vacuoles to maintain metal homeostasis. In Oryza sativa subsp. japonica (Rice), this protein is Metal tolerance protein 3 (MTP3).